We begin with the raw amino-acid sequence, 197 residues long: MAVRPIRIVGDPVLHTATEPVPVGADGSLPADLADLITDMYDTMDAAHGVGLAANQIGVSKRVFVYDCADERKKTTRRRGVVINPVLETSEIPETMPDPEDDDEGCLSVPGESFPTGRADWARVTGLDADGTPITLEGTDLFARMLQHETGHLDGFLYLDRLIGRNARSAKKTVKSHGWGVPGLSWMPGEDPDPFGH.

Residues C106 and H148 each coordinate Fe cation. E149 is a catalytic residue. Fe cation is bound at residue H152.

This sequence belongs to the polypeptide deformylase family. The cofactor is Fe(2+).

The enzyme catalyses N-terminal N-formyl-L-methionyl-[peptide] + H2O = N-terminal L-methionyl-[peptide] + formate. In terms of biological role, removes the formyl group from the N-terminal Met of newly synthesized proteins. Requires at least a dipeptide for an efficient rate of reaction. N-terminal L-methionine is a prerequisite for activity but the enzyme has broad specificity at other positions. The sequence is that of Peptide deformylase from Mycolicibacterium vanbaalenii (strain DSM 7251 / JCM 13017 / BCRC 16820 / KCTC 9966 / NRRL B-24157 / PYR-1) (Mycobacterium vanbaalenii).